The following is a 285-amino-acid chain: Phosphate import ATP-binding protein PstB (285 aa).

The region spanning 22–262 is the ABC transporter domain; it reads MRAVDLTLGF…PQHEETVRYF (241 aa). Residue 54–61 participates in ATP binding; sequence GPTGSGKT. The tract at residues 266 to 285 is disordered; it reads RPAQGSDRGSSQTAGVAESQ. Residues 272–285 are compositionally biased toward polar residues; that stretch reads DRGSSQTAGVAESQ.

It belongs to the ABC transporter superfamily. Phosphate importer (TC 3.A.1.7) family. In terms of assembly, the complex is composed of two ATP-binding proteins (PstB), two transmembrane proteins (PstC and PstA) and a solute-binding protein (PstS).

It localises to the cell membrane. It carries out the reaction phosphate(out) + ATP + H2O = ADP + 2 phosphate(in) + H(+). Part of the ABC transporter complex PstSACB involved in phosphate import. Responsible for energy coupling to the transport system. The sequence is that of Phosphate import ATP-binding protein PstB from Mycobacterium intracellulare.